An 86-amino-acid chain; its full sequence is Cell division topological specificity factor (86 aa).

This sequence belongs to the MinE family.

Prevents the cell division inhibition by proteins MinC and MinD at internal division sites while permitting inhibition at polar sites. This ensures cell division at the proper site by restricting the formation of a division septum at the midpoint of the long axis of the cell. This is Cell division topological specificity factor from Shewanella pealeana (strain ATCC 700345 / ANG-SQ1).